Reading from the N-terminus, the 290-residue chain is ATP synthase gamma chain (290 aa).

It belongs to the ATPase gamma chain family. As to quaternary structure, F-type ATPases have 2 components, CF(1) - the catalytic core - and CF(0) - the membrane proton channel. CF(1) has five subunits: alpha(3), beta(3), gamma(1), delta(1), epsilon(1). CF(0) has three main subunits: a, b and c.

It is found in the cell inner membrane. Produces ATP from ADP in the presence of a proton gradient across the membrane. The gamma chain is believed to be important in regulating ATPase activity and the flow of protons through the CF(0) complex. This is ATP synthase gamma chain from Desulfotalea psychrophila (strain LSv54 / DSM 12343).